A 457-amino-acid chain; its full sequence is Protein trichome birefringence-like 4 (457 aa).

Residues 19–37 (IFLTSLFFLSLFLLSSSSL) form a helical; Signal-anchor for type II membrane protein membrane-spanning segment. The short motif at 173 to 175 (GDS) is the GDS motif element. The DCXHWCLPGXXDXWN motif motif lies at 420 to 434 (DCSHWCLPGVPDSWN).

The protein belongs to the PC-esterase family. TBL subfamily.

Its subcellular location is the membrane. Its function is as follows. May act as a bridging protein that binds pectin and other cell wall polysaccharides. Probably involved in maintaining esterification of pectins. May be involved in the specific O-acetylation of cell wall polymers. This Arabidopsis thaliana (Mouse-ear cress) protein is Protein trichome birefringence-like 4 (TBL4).